An 82-amino-acid polypeptide reads, in one-letter code: Large ribosomal subunit protein bL27c (82 aa).

Positions 1–22 (MAHKKGAGSTKNGRDSNSKRLG) are disordered.

It belongs to the bacterial ribosomal protein bL27 family.

It is found in the plastid. The protein resides in the chloroplast. This is Large ribosomal subunit protein bL27c (rpl27) from Chrysotila carterae (Marine alga).